We begin with the raw amino-acid sequence, 84 residues long: Acyl carrier protein homolog (84 aa).

One can recognise a Carrier domain in the interval 4–79; the sequence is HEILLKIKEI…DLVLEVKNLL (76 aa). Ser39 is subject to O-(pantetheine 4'-phosphoryl)serine.

In terms of processing, 4'-phosphopantetheine is transferred from CoA to a specific serine of the apo-ACP-like protein.

It functions in the pathway lipid metabolism; fatty acid biosynthesis. Carrier of the growing fatty acid chain in fatty acid biosynthesis. The protein is Acyl carrier protein homolog of Mycoplasma genitalium (strain ATCC 33530 / DSM 19775 / NCTC 10195 / G37) (Mycoplasmoides genitalium).